Consider the following 263-residue polypeptide: Mediator of RNA polymerase II transcription subunit 6 (263 aa).

Residues 159–205 (NSIHGSSSKPSQSSAVSKPSSTNTGTNATTTPITLTTPSGATVPSTV) form a disordered region. Low complexity predominate over residues 164–200 (SSSKPSQSSAVSKPSSTNTGTNATTTPITLTTPSGAT).

This sequence belongs to the Mediator complex subunit 6 family. In terms of assembly, component of the Mediator complex.

The protein localises to the nucleus. Its function is as follows. Component of the Mediator complex, a coactivator involved in the regulated transcription of nearly all RNA polymerase II-dependent genes. Mediator functions as a bridge to convey information from gene-specific regulatory proteins to the basal RNA polymerase II transcription machinery. Mediator is recruited to promoters by direct interactions with regulatory proteins and serves as a scaffold for the assembly of a functional preinitiation complex with RNA polymerase II and the general transcription factors. This chain is Mediator of RNA polymerase II transcription subunit 6 (MED6), found in Candida albicans (strain SC5314 / ATCC MYA-2876) (Yeast).